Here is a 244-residue protein sequence, read N- to C-terminus: Protein pendolino (244 aa).

Residues 20 to 176 (QQEYKILAEY…VQENIKESKE (157 aa)) enclose the UBC core domain.

This sequence belongs to the ubiquitin-conjugating enzyme family. FTS subfamily. As to quaternary structure, interacts (via N-terminus) with cav/HOAP (via N-terminus); the interaction is direct. Probably interacts (via N-terminus and UBC domain) with ver and moi.

Its subcellular location is the nucleus. It is found in the nucleolus. The protein resides in the chromosome. Its function is as follows. Required for efficient DNA replication, probably through involvement in telomere replication. May have a role in telomere capping of heterochromatic chromosome ends. This chain is Protein pendolino, found in Drosophila melanogaster (Fruit fly).